We begin with the raw amino-acid sequence, 776 residues long: A-type ATP synthase subunit A (776 aa).

The protein belongs to the ATPase alpha/beta chains family. Has multiple subunits with at least A(3), B(3), C, D, E, F, H, I and proteolipid K(x). This protein undergoes a protein self splicing that involves a post-translational excision of the VDE intervening region (intein) followed by peptide ligation.

The protein resides in the cell membrane. The catalysed reaction is ATP + H2O + 4 H(+)(in) = ADP + phosphate + 5 H(+)(out). Its function is as follows. Component of the A-type ATP synthase that produces ATP from ADP in the presence of a proton gradient across the membrane. The A chain is the catalytic subunit. The chain is A-type ATP synthase subunit A from Thermoplasma volcanium (strain ATCC 51530 / DSM 4299 / JCM 9571 / NBRC 15438 / GSS1).